Reading from the N-terminus, the 214-residue chain is N-(5'-phosphoribosyl)anthranilate isomerase (214 aa).

The protein belongs to the TrpF family.

The enzyme catalyses N-(5-phospho-beta-D-ribosyl)anthranilate = 1-(2-carboxyphenylamino)-1-deoxy-D-ribulose 5-phosphate. It functions in the pathway amino-acid biosynthesis; L-tryptophan biosynthesis; L-tryptophan from chorismate: step 3/5. The polypeptide is N-(5'-phosphoribosyl)anthranilate isomerase (Haloarcula marismortui (strain ATCC 43049 / DSM 3752 / JCM 8966 / VKM B-1809) (Halobacterium marismortui)).